The primary structure comprises 263 residues: tRNA dimethylallyltransferase (263 aa).

This sequence belongs to the IPP transferase family. Monomer. Mg(2+) is required as a cofactor.

It catalyses the reaction adenosine(37) in tRNA + dimethylallyl diphosphate = N(6)-dimethylallyladenosine(37) in tRNA + diphosphate. Its function is as follows. Catalyzes the transfer of a dimethylallyl group onto the adenine at position 37 in tRNAs that read codons beginning with uridine, leading to the formation of N6-(dimethylallyl)adenosine (i(6)A). In Leifsonia xyli subsp. xyli (strain CTCB07), this protein is tRNA dimethylallyltransferase.